A 364-amino-acid chain; its full sequence is Paraneoplastic antigen Ma2 homolog (364 aa).

Ala-2 carries the post-translational modification N-acetylalanine. Acidic residues predominate over residues 335-353 (EEEEASFENESIEEPEEGD). Residues 335–364 (EEEEASFENESIEEPEEGDGYGRWNHEGDD) form a disordered region.

It belongs to the PNMA family.

The protein resides in the nucleus. It localises to the nucleolus. This Pongo abelii (Sumatran orangutan) protein is Paraneoplastic antigen Ma2 homolog (PNMA2).